The sequence spans 389 residues: Sulfate adenylyltransferase (389 aa).

The protein belongs to the sulfate adenylyltransferase family.

It carries out the reaction sulfate + ATP + H(+) = adenosine 5'-phosphosulfate + diphosphate. It functions in the pathway sulfur metabolism; hydrogen sulfide biosynthesis; sulfite from sulfate: step 1/3. This chain is Sulfate adenylyltransferase, found in Hyperthermus butylicus (strain DSM 5456 / JCM 9403 / PLM1-5).